The following is a 556-amino-acid chain: Oxygen-dependent choline dehydrogenase (556 aa).

An FAD-binding site is contributed by 4–33 (DYIIIGAGSAGNVLATRLTEDPNTTVLLLE). H473 functions as the Proton acceptor in the catalytic mechanism.

It belongs to the GMC oxidoreductase family. Requires FAD as cofactor.

It carries out the reaction choline + A = betaine aldehyde + AH2. The catalysed reaction is betaine aldehyde + NAD(+) + H2O = glycine betaine + NADH + 2 H(+). It participates in amine and polyamine biosynthesis; betaine biosynthesis via choline pathway; betaine aldehyde from choline (cytochrome c reductase route): step 1/1. In terms of biological role, involved in the biosynthesis of the osmoprotectant glycine betaine. Catalyzes the oxidation of choline to betaine aldehyde and betaine aldehyde to glycine betaine at the same rate. This Escherichia coli O6:K15:H31 (strain 536 / UPEC) protein is Oxygen-dependent choline dehydrogenase.